The primary structure comprises 533 residues: tRNA(Ile)-lysidine synthase (533 aa).

Residue 21–26 (SGGADS) coordinates ATP. Residues 377-500 (DLLDTAMGEA…DLLSSHWGHV (124 aa)) form the CMP/dCMP-type deaminase domain.

It belongs to the tRNA(Ile)-lysidine synthase family.

The protein resides in the cytoplasm. It carries out the reaction cytidine(34) in tRNA(Ile2) + L-lysine + ATP = lysidine(34) in tRNA(Ile2) + AMP + diphosphate + H(+). In terms of biological role, ligates lysine onto the cytidine present at position 34 of the AUA codon-specific tRNA(Ile) that contains the anticodon CAU, in an ATP-dependent manner. Cytidine is converted to lysidine, thus changing the amino acid specificity of the tRNA from methionine to isoleucine. The chain is tRNA(Ile)-lysidine synthase from Deinococcus deserti (strain DSM 17065 / CIP 109153 / LMG 22923 / VCD115).